The chain runs to 328 residues: tRNA dimethylallyltransferase (328 aa).

An ATP-binding site is contributed by 25–32 (GNTGSGKS). 27 to 32 (TGSGKS) lines the substrate pocket. Residues 50–53 (DSRQ) form an interaction with substrate tRNA region.

It belongs to the IPP transferase family. In terms of assembly, monomer. It depends on Mg(2+) as a cofactor.

It catalyses the reaction adenosine(37) in tRNA + dimethylallyl diphosphate = N(6)-dimethylallyladenosine(37) in tRNA + diphosphate. Its function is as follows. Catalyzes the transfer of a dimethylallyl group onto the adenine at position 37 in tRNAs that read codons beginning with uridine, leading to the formation of N6-(dimethylallyl)adenosine (i(6)A). This chain is tRNA dimethylallyltransferase, found in Dehalococcoides mccartyi (strain ATCC BAA-2100 / JCM 16839 / KCTC 5957 / BAV1).